Consider the following 198-residue polypeptide: Na(+)-translocating NADH-quinone reductase subunit E (198 aa).

6 helical membrane passes run 11-31 (SIFIENMALSFFLGMCTFLAV), 39-59 (FGLGVAVVVVLTIAVPVNNLV), 77-97 (FLNFITFIGVIAALVQILEMV), 110-130 (GIFLPLITVNCAIFGGVSFMV), 140-160 (IVYGFGSGVGWMLAIVALAGI), and 176-196 (LGITFITVGLMALGFMSFSGV).

Belongs to the NqrDE/RnfAE family. In terms of assembly, composed of six subunits; NqrA, NqrB, NqrC, NqrD, NqrE and NqrF. Post-translationally, the N-terminus is blocked.

It localises to the cell inner membrane. The enzyme catalyses a ubiquinone + n Na(+)(in) + NADH + H(+) = a ubiquinol + n Na(+)(out) + NAD(+). Its activity is regulated as follows. This reaction is tightly coupled to the Na(+) pumping activity and specifically requires Na(+) for activity. Inhibited by korormicin and 2-N-heptyl-4-hydroxyquinoline N-oxide (HQNO). NQR complex catalyzes the reduction of ubiquinone-1 to ubiquinol by two successive reactions, coupled with the transport of Na(+) ions from the cytoplasm to the periplasm. NqrA to NqrE are probably involved in the second step, the conversion of ubisemiquinone to ubiquinol. The polypeptide is Na(+)-translocating NADH-quinone reductase subunit E (Vibrio alginolyticus).